Reading from the N-terminus, the 282-residue chain is tRNA pseudouridine synthase B (282 aa).

The active-site Nucleophile is the aspartate 39.

Belongs to the pseudouridine synthase TruB family. Type 1 subfamily.

It carries out the reaction uridine(55) in tRNA = pseudouridine(55) in tRNA. Its function is as follows. Responsible for synthesis of pseudouridine from uracil-55 in the psi GC loop of transfer RNAs. In Borreliella afzelii (strain PKo) (Borrelia afzelii), this protein is tRNA pseudouridine synthase B.